A 375-amino-acid chain; its full sequence is Alcohol dehydrogenase 1C (375 aa).

An N-acetylserine modification is found at Ser-2. Position 23 is a phosphoserine (Ser-23). Cys-47, His-68, Cys-98, Cys-101, Cys-104, Cys-112, and Cys-175 together coordinate Zn(2+). NAD(+) is bound by residues 200–205, Asp-224, Lys-229, Ile-270, 293–295, 318–320, and Arg-370; these read GLGGVG, VGV, and AIF.

The protein belongs to the zinc-containing alcohol dehydrogenase family. In terms of assembly, dimer of identical or non-identical chains of class I alcohol dehydrogenase: ADH1A, ADH1B, and ADH1C. The cofactor is Zn(2+). In terms of tissue distribution, expressed in kidney.

The protein localises to the cytoplasm. The catalysed reaction is a primary alcohol + NAD(+) = an aldehyde + NADH + H(+). The enzyme catalyses ethanol + NAD(+) = acetaldehyde + NADH + H(+). In terms of biological role, alcohol dehydrogenase. Exhibits high activity for ethanol oxidation and plays a major role in ethanol catabolism. In Papio hamadryas (Hamadryas baboon), this protein is Alcohol dehydrogenase 1C (ADH1C).